A 121-amino-acid polypeptide reads, in one-letter code: Large ribosomal subunit protein bL12 (121 aa).

It belongs to the bacterial ribosomal protein bL12 family. In terms of assembly, homodimer. Part of the ribosomal stalk of the 50S ribosomal subunit. Forms a multimeric L10(L12)X complex, where L10 forms an elongated spine to which 2 to 4 L12 dimers bind in a sequential fashion. Binds GTP-bound translation factors.

Forms part of the ribosomal stalk which helps the ribosome interact with GTP-bound translation factors. Is thus essential for accurate translation. The protein is Large ribosomal subunit protein bL12 of Streptococcus equi subsp. equi (strain 4047).